The following is a 432-amino-acid chain: Ribosomal protein uS12 methylthiotransferase RimO (432 aa).

The region spanning I2–K115 is the MTTase N-terminal domain. Residues C11, C47, C78, C151, C155, and C158 each contribute to the [4Fe-4S] cluster site. One can recognise a Radical SAM core domain in the interval E137 to A367.

Belongs to the methylthiotransferase family. RimO subfamily. [4Fe-4S] cluster is required as a cofactor.

The protein localises to the cytoplasm. The catalysed reaction is L-aspartate(89)-[ribosomal protein uS12]-hydrogen + (sulfur carrier)-SH + AH2 + 2 S-adenosyl-L-methionine = 3-methylsulfanyl-L-aspartate(89)-[ribosomal protein uS12]-hydrogen + (sulfur carrier)-H + 5'-deoxyadenosine + L-methionine + A + S-adenosyl-L-homocysteine + 2 H(+). Its function is as follows. Catalyzes the methylthiolation of an aspartic acid residue of ribosomal protein uS12. This is Ribosomal protein uS12 methylthiotransferase RimO from Moorella thermoacetica (strain ATCC 39073 / JCM 9320).